The following is a 231-amino-acid chain: Uridylate kinase (231 aa).

6 to 9 (KLSG) is a binding site for ATP. The interval 14–19 (GEGGRG) is involved in allosteric activation by GTP. The ATP site is built by glycine 49 and arginine 53. Residues aspartate 66 and 127 to 134 (TSNPFFTT) each bind UMP. Positions 154, 160, and 163 each coordinate ATP.

Belongs to the UMP kinase family. In terms of assembly, homohexamer.

The protein localises to the cytoplasm. It carries out the reaction UMP + ATP = UDP + ADP. Its pathway is pyrimidine metabolism; CTP biosynthesis via de novo pathway; UDP from UMP (UMPK route): step 1/1. Its activity is regulated as follows. Allosterically activated by GTP. Inhibited by UTP. Its function is as follows. Catalyzes the reversible phosphorylation of UMP to UDP. The sequence is that of Uridylate kinase from Thermotoga maritima (strain ATCC 43589 / DSM 3109 / JCM 10099 / NBRC 100826 / MSB8).